A 237-amino-acid polypeptide reads, in one-letter code: Ribonuclease 3 (237 aa).

One can recognise an RNase III domain in the interval 4-133 (LTELEKSLGV…VLAAIYLDKG (130 aa)). Glutamate 46 lines the Mg(2+) pocket. Catalysis depends on residues aspartate 50 and glutamate 122. Glutamate 122 contributes to the Mg(2+) binding site. Positions 160 to 229 (DYKSRLQELV…AKEALQQFEN (70 aa)) constitute a DRBM domain.

The protein belongs to the ribonuclease III family. In terms of assembly, homodimer. It depends on Mg(2+) as a cofactor.

Its subcellular location is the cytoplasm. The enzyme catalyses Endonucleolytic cleavage to 5'-phosphomonoester.. Digests double-stranded RNA. Involved in the processing of primary rRNA transcript to yield the immediate precursors to the large and small rRNAs (23S and 16S). Processes some mRNAs, and tRNAs when they are encoded in the rRNA operon. Processes pre-crRNA and tracrRNA of type II CRISPR loci if present in the organism. The chain is Ribonuclease 3 from Dehalococcoides mccartyi (strain ATCC BAA-2266 / KCTC 15142 / 195) (Dehalococcoides ethenogenes (strain 195)).